A 431-amino-acid chain; its full sequence is UPF0597 protein LCA_0156 (431 aa).

The protein belongs to the UPF0597 family.

This Latilactobacillus sakei subsp. sakei (strain 23K) (Lactobacillus sakei subsp. sakei) protein is UPF0597 protein LCA_0156.